The sequence spans 519 residues: Cytochrome P450 72C1 (519 aa).

The chain crosses the membrane as a helical span at residues 10–30 (VFLIGFLILILNWVWRAVNWV). Heme is bound at residue Cys-467.

The protein belongs to the cytochrome P450 family. It depends on heme as a cofactor. As to expression, expressed in hypocotyls, roots, cotyledons, stamens and silique junctions.

The protein resides in the membrane. Atypical cytochrome P450 involved in brassinosteroids (BRs) inactivation and regulation of BRs homeostasis. Does not possess carbon 26 hydroxylase activity and may inactivate BRs by hydroxylation of carbons other than C-26. Acts in association with CYP734A1 to inactivate BRs and modulate photomorphogenesis. The protein is Cytochrome P450 72C1 (CYP72C1) of Arabidopsis thaliana (Mouse-ear cress).